Reading from the N-terminus, the 472-residue chain is Argininosuccinate lyase (472 aa).

It belongs to the lyase 1 family. Argininosuccinate lyase subfamily.

The protein resides in the cytoplasm. It catalyses the reaction 2-(N(omega)-L-arginino)succinate = fumarate + L-arginine. The protein operates within amino-acid biosynthesis; L-arginine biosynthesis; L-arginine from L-ornithine and carbamoyl phosphate: step 3/3. In Mycobacterium avium (strain 104), this protein is Argininosuccinate lyase.